The primary structure comprises 98 residues: Large ribosomal subunit protein bL28 (98 aa).

As to quaternary structure, part of the 50S ribosomal subunit.

This is Large ribosomal subunit protein bL28 (rpmB) from Thermus thermophilus (strain ATCC 27634 / DSM 579 / HB8).